A 158-amino-acid chain; its full sequence is NAD(P)H-quinone oxidoreductase subunit J, chloroplastic (158 aa).

Belongs to the complex I 30 kDa subunit family. NDH is composed of at least 16 different subunits, 5 of which are encoded in the nucleus.

It is found in the plastid. Its subcellular location is the chloroplast thylakoid membrane. The catalysed reaction is a plastoquinone + NADH + (n+1) H(+)(in) = a plastoquinol + NAD(+) + n H(+)(out). It catalyses the reaction a plastoquinone + NADPH + (n+1) H(+)(in) = a plastoquinol + NADP(+) + n H(+)(out). Functionally, NDH shuttles electrons from NAD(P)H:plastoquinone, via FMN and iron-sulfur (Fe-S) centers, to quinones in the photosynthetic chain and possibly in a chloroplast respiratory chain. The immediate electron acceptor for the enzyme in this species is believed to be plastoquinone. Couples the redox reaction to proton translocation, and thus conserves the redox energy in a proton gradient. This Angiopteris evecta (Mule's foot fern) protein is NAD(P)H-quinone oxidoreductase subunit J, chloroplastic.